We begin with the raw amino-acid sequence, 622 residues long: SLAIN motif-containing protein-like (622 aa).

Residues 34 to 60 adopt a coiled-coil conformation; the sequence is DLKEVQKLHELVKRLEIQNQQLKIKRN. Disordered stretches follow at residues 404–441 and 473–622; these read HRYS…IQNH and VRSS…DGCY. Positions 405–415 are enriched in low complexity; the sequence is RYSPSPLSSPR. 4 stretches are compositionally biased toward polar residues: residues 416–430, 484–502, 525–591, and 599–611; these read CQSP…TTSR, QGPS…STPP, VSTS…STVP, and SRRS…MNST.

It belongs to the SLAIN motif-containing family.

This is SLAIN motif-containing protein-like from Xenopus tropicalis (Western clawed frog).